Consider the following 465-residue polypeptide: Cysteine--tRNA ligase (465 aa).

C27 contacts Zn(2+). Positions 29-39 (PTVYDDAHLGH) match the 'HIGH' region motif. Residues C207, H237, and E241 each coordinate Zn(2+). The 'KMSKS' region motif lies at 269-273 (KMSKS). Position 272 (K272) interacts with ATP.

Belongs to the class-I aminoacyl-tRNA synthetase family. As to quaternary structure, monomer. Zn(2+) is required as a cofactor.

It is found in the cytoplasm. It carries out the reaction tRNA(Cys) + L-cysteine + ATP = L-cysteinyl-tRNA(Cys) + AMP + diphosphate. This chain is Cysteine--tRNA ligase, found in Helicobacter pylori (strain Shi470).